Here is a 346-residue protein sequence, read N- to C-terminus: Phosphoribosylformylglycinamidine cyclo-ligase (346 aa).

This sequence belongs to the AIR synthase family.

The protein resides in the cytoplasm. The enzyme catalyses 2-formamido-N(1)-(5-O-phospho-beta-D-ribosyl)acetamidine + ATP = 5-amino-1-(5-phospho-beta-D-ribosyl)imidazole + ADP + phosphate + H(+). The protein operates within purine metabolism; IMP biosynthesis via de novo pathway; 5-amino-1-(5-phospho-D-ribosyl)imidazole from N(2)-formyl-N(1)-(5-phospho-D-ribosyl)glycinamide: step 2/2. This is Phosphoribosylformylglycinamidine cyclo-ligase from Synechococcus sp. (strain CC9311).